A 252-amino-acid polypeptide reads, in one-letter code: Protein IL-40 (252 aa).

An N-terminal signal peptide occupies residues 1-18; the sequence is MALLQLLLFAMLAACGFS. Asparagine 82 and asparagine 177 each carry an N-linked (GlcNAc...) asparagine glycan.

Expressed in bone marrow, spleen and lymph node.

The protein localises to the secreted. Its function is as follows. Probable B cell-associated cytokine that plays a role in the regulation of humoral immune responses. Involved in lymphocyte B cell development and immunoglobulin/IgA production. In Mus musculus (Mouse), this protein is Protein IL-40.